Consider the following 152-residue polypeptide: Peptide deformylase (152 aa).

The Fe cation site is built by Cys91 and His133. Glu134 is an active-site residue. Fe cation is bound at residue His137.

The protein belongs to the polypeptide deformylase family. Fe(2+) is required as a cofactor.

It carries out the reaction N-terminal N-formyl-L-methionyl-[peptide] + H2O = N-terminal L-methionyl-[peptide] + formate. Its function is as follows. Removes the formyl group from the N-terminal Met of newly synthesized proteins. Requires at least a dipeptide for an efficient rate of reaction. N-terminal L-methionine is a prerequisite for activity but the enzyme has broad specificity at other positions. The chain is Peptide deformylase from Wigglesworthia glossinidia brevipalpis.